A 348-amino-acid polypeptide reads, in one-letter code: MPDRLILLRPDDWHIHLRDGAALSRTVTDAARTFGRAIVMPNLVPPVRNASEAGAYRQRIQAARPADSRFEPLMTLYLTDKTSPEDIRTAKAQGFVHAAKLYPAGATTNSDAGVTRIDNIFPILEAMAEAGLPLLVHGEVTHSEVDVFDREKRFIDENLVRIIEHFPTLKVVFEHITTRDAVQFVETSSSNVGATITAHHLLYNRNHMLVGGIRPHFYCLPILKRRTHQEALLDAATSGNTKFFLGTDSAPHARHAKEAACGCAGCYTAYAAIELYAEAFEQRSALDRLEAFASHHGADFYGIPRNTDHITLIREEWTAPACMTFGEHSLVPLRAGEKLRWRLLEEKM.

Residues H14 and H16 each coordinate Zn(2+). Substrate contacts are provided by residues 16–18 and N42; that span reads HLR. The Zn(2+) site is built by K100, H137, and H175. K100 is modified (N6-carboxylysine). H137 contributes to the substrate binding site. L220 contacts substrate. D248 lines the Zn(2+) pocket. The active site involves D248. Residues H252 and A264 each coordinate substrate.

Belongs to the metallo-dependent hydrolases superfamily. DHOase family. Class II DHOase subfamily. Homodimer. The cofactor is Zn(2+).

It carries out the reaction (S)-dihydroorotate + H2O = N-carbamoyl-L-aspartate + H(+). It functions in the pathway pyrimidine metabolism; UMP biosynthesis via de novo pathway; (S)-dihydroorotate from bicarbonate: step 3/3. Catalyzes the reversible cyclization of carbamoyl aspartate to dihydroorotate. This Azotobacter vinelandii (strain DJ / ATCC BAA-1303) protein is Dihydroorotase.